We begin with the raw amino-acid sequence, 286 residues long: Bifunctional protein FolD (286 aa).

NADP(+) contacts are provided by residues 165-167 (GRS), Ser-190, and Val-231.

The protein belongs to the tetrahydrofolate dehydrogenase/cyclohydrolase family. Homodimer.

It carries out the reaction (6R)-5,10-methylene-5,6,7,8-tetrahydrofolate + NADP(+) = (6R)-5,10-methenyltetrahydrofolate + NADPH. The catalysed reaction is (6R)-5,10-methenyltetrahydrofolate + H2O = (6R)-10-formyltetrahydrofolate + H(+). It participates in one-carbon metabolism; tetrahydrofolate interconversion. Catalyzes the oxidation of 5,10-methylenetetrahydrofolate to 5,10-methenyltetrahydrofolate and then the hydrolysis of 5,10-methenyltetrahydrofolate to 10-formyltetrahydrofolate. This is Bifunctional protein FolD from Bacillus anthracis (strain A0248).